A 345-amino-acid polypeptide reads, in one-letter code: Trace amine-associated receptor 6 (345 aa).

Residues 1 to 32 lie on the Extracellular side of the membrane; that stretch reads MSSNSSLLVAVQLCYPNVNGSCVETLYSPGSR. N-linked (GlcNAc...) asparagine glycosylation is found at Asn-4 and Asn-19. Cystine bridges form between Cys-22/Cys-186 and Cys-105/Cys-190. The chain crosses the membrane as a helical span at residues 33–53; sequence VILYIVFGFGAVLAVFGNLLV. Residues 54 to 68 are Cytoplasmic-facing; it reads MISILHFKQLHSPTN. Residues 69-89 traverse the membrane as a helical segment; that stretch reads FLVASLACADFLVGVTVMPFS. The Extracellular segment spans residues 90 to 107; the sequence is MVRTVESCWYFGRSFCTF. Residues 108-128 form a helical membrane-spanning segment; sequence HTCCDVAFCYSSLFHLCFISI. Over 129 to 147 the chain is Cytoplasmic; that stretch reads DRYIAVTDPLVYPTKFTVS. The helical transmembrane segment at 148–168 threads the bilayer; sequence VSGICISVSWILPLMYSGAVF. Over 169-202 the chain is Extracellular; that stretch reads YTGVYDDGLEELSDALNCIGGCQTVVNQNWVLID. A helical membrane pass occupies residues 203 to 223; sequence CLSFFIPTFIMIILYGNIFLV. At 224-259 the chain is on the cytoplasmic side; that stretch reads ARRQAKKIENTGSKTESSSESYKARVARRERKAAKT. Residues 260–276 form a helical membrane-spanning segment; it reads LGVTVVAFMISWLPYSI. The Extracellular segment spans residues 277–282; sequence DSLIDA. A helical membrane pass occupies residues 283 to 302; that stretch reads FMGFITPAYIYEICCWCAYY. Residues 303 to 345 are Cytoplasmic-facing; sequence NSAMNPLIYALFYPWFRKAIKVIVTGQVLKNSSATMNLFSEHI.

This sequence belongs to the G-protein coupled receptor 1 family.

Its subcellular location is the cell membrane. Functionally, olfactory receptor specific for trace amines, such as beta-phenylethylamine (beta-PEA). Trace amine compounds are enriched in animal body fluids and act on trace amine-associated receptors (TAARs) to elicit both intraspecific and interspecific innate behaviors. Beta-PEA-binding causes a conformation change that triggers signaling via G(s)-class of G alpha proteins (GNAL or GNAS). This chain is Trace amine-associated receptor 6 (TAAR6), found in Pan troglodytes (Chimpanzee).